A 360-amino-acid chain; its full sequence is Cyclin-dependent kinase 10 (360 aa).

Positions 39 to 323 constitute a Protein kinase domain; sequence FEKLNRIGEG…SGDCLESSYF (285 aa). Residues 45–53 and Lys68 contribute to the ATP site; that span reads IGEGTYGIV. Asp163 acts as the Proton acceptor in catalysis. Position 196 is a phosphothreonine (Thr196). The segment at 334–360 is disordered; it reads LMPTFPHHRNKRAAPAAAEGQSKRCRP.

The protein belongs to the protein kinase superfamily. CMGC Ser/Thr protein kinase family. CDC2/CDKX subfamily. As to quaternary structure, heterodimer with CCNQ, the interaction is required for kinase activity. Interacts with ETS2. Interacts with PRK2.

Its subcellular location is the cytoplasm. The protein resides in the cytoskeleton. The protein localises to the cilium basal body. It carries out the reaction L-seryl-[protein] + ATP = O-phospho-L-seryl-[protein] + ADP + H(+). The catalysed reaction is L-threonyl-[protein] + ATP = O-phospho-L-threonyl-[protein] + ADP + H(+). Cyclin-dependent kinase that phosphorylates the transcription factor ETS2 (in vitro) and positively controls its proteasomal degradation (in cells). Involved in the regulation of actin cytoskeleton organization through the phosphorylation of actin dynamics regulators such as PKN2. Is a negative regulator of ciliogenesis through phosphorylation of PKN2 and promotion of RhoA signaling. The sequence is that of Cyclin-dependent kinase 10 (Cdk10) from Mus musculus (Mouse).